The primary structure comprises 540 residues: Acrosin-binding protein (540 aa).

An N-terminal signal peptide occupies residues 1–24 (MKLAASFLLMLLEVLLLPETPLSA). Positions 25–104 (EEALASTPGS…ASWFESFCQF (80 aa)) are pro-ACR binding. Residues 25–272 (EEALASTPGS…NPSFFTPRVR (248 aa)) constitute a propeptide, removed in mature form. The segment at 181–266 (SLSLGGKEQQ…SKSLSSNPSF (86 aa)) is disordered. The segment covering 195–213 (LGLEQQHKQEQIQEHKLEE) has biased composition (basic and acidic residues). Residues 214–241 (AQEQEEQEEEEEEEEAKQEEGQGTEEGL) are compositionally biased toward acidic residues. Polar residues predominate over residues 256–266 (QSKSLSSNPSF). Positions 316-424 (LPHTETLMVL…NQAKIPEKGR (109 aa)) are pro-ACR binding.

Binds pro-ACR. Does not bind the mature form of ACR. In terms of assembly, binds pro-ACR. Does not bind mature form of ACR. The N-terminus is blocked. In terms of processing, phosphorylated on Tyr residues in capacitated sperm. Post-translationally, synthesized as a 60-kDa precursor, the 32-kDa mature form is post-translationally produced by the removal of the N-terminal half of the precursor during sperm maturation in the testis and/or epididymis.

It localises to the cytoplasmic vesicle. It is found in the secretory vesicle. The protein resides in the acrosome. In terms of biological role, acrosomal protein that maintains proacrosin (pro-ACR) as an enzymatically inactive zymogen in the acrosome. Involved also in the acrosome formation. Functionally, maintains pro-ACR as an enzymatically inactive zymogen in the acrosome until acrosomal exocytosis. Partially also contributes to the assembly of acrosomal proteins to form an acrosomal granule. Rodent specific isoform that participates in the formation of the acrosomal granule into the center of the acrosomal vesicle during early spermiogenesis. In the fertilization process promotes ACR release from the acrosome during acrosomal exocytosis. The protein is Acrosin-binding protein of Rattus norvegicus (Rat).